A 146-amino-acid polypeptide reads, in one-letter code: 3-dehydroquinate dehydratase (146 aa).

Tyr-22 (proton acceptor) is an active-site residue. Substrate-binding residues include Asn-73, His-79, and Asp-86. The Proton donor role is filled by His-99. Substrate-binding positions include 100-101 and Arg-110; that span reads LS.

This sequence belongs to the type-II 3-dehydroquinase family. Homododecamer.

It catalyses the reaction 3-dehydroquinate = 3-dehydroshikimate + H2O. Its pathway is metabolic intermediate biosynthesis; chorismate biosynthesis; chorismate from D-erythrose 4-phosphate and phosphoenolpyruvate: step 3/7. Its function is as follows. Catalyzes a trans-dehydration via an enolate intermediate. The sequence is that of 3-dehydroquinate dehydratase from Synechococcus sp. (strain CC9902).